Reading from the N-terminus, the 168-residue chain is UPF0134 protein MPN_524 (168 aa).

Belongs to the UPF0134 family.

This chain is UPF0134 protein MPN_524, found in Mycoplasma pneumoniae (strain ATCC 29342 / M129 / Subtype 1) (Mycoplasmoides pneumoniae).